The chain runs to 400 residues: Phosphoglycerate kinase (400 aa).

Substrate contacts are provided by residues 19-21 (DLN), R38, 61-64 (HLGR), R124, and R161. ATP is bound by residues K211, G299, E330, and 356–359 (GGDS).

It belongs to the phosphoglycerate kinase family. In terms of assembly, monomer.

The protein resides in the cytoplasm. The catalysed reaction is (2R)-3-phosphoglycerate + ATP = (2R)-3-phospho-glyceroyl phosphate + ADP. It participates in carbohydrate degradation; glycolysis; pyruvate from D-glyceraldehyde 3-phosphate: step 2/5. In Frankia casuarinae (strain DSM 45818 / CECT 9043 / HFP020203 / CcI3), this protein is Phosphoglycerate kinase.